Reading from the N-terminus, the 326-residue chain is Metallophosphoesterase domain-containing protein 1 (326 aa).

The protein belongs to the UPF0046 family.

Its function is as follows. May have metallophosphoesterase activity (in vitro). The chain is Metallophosphoesterase domain-containing protein 1 (Mpped1) from Mus musculus (Mouse).